Consider the following 181-residue polypeptide: ADP-ribosylation factor-like protein 1 (181 aa).

The N-myristoyl glycine moiety is linked to residue glycine 2. GTP is bound by residues 24-31, 45-48, glycine 70, 126-129, and 160-161; these read GLDGAGKT, TIPT, NKQD, and AT. Residues threonine 31 and threonine 48 each contribute to the Mg(2+) site.

This sequence belongs to the small GTPase superfamily. Arf family. As to quaternary structure, the GTP-bound form interacts with GOLGA1. The GTP-bound form interacts with GOLGA4 and RGPD8. The GTP-bound form directly interacts with ARFIP2. Binds to SCOC, preferentially in its GTP-bound form. May interact with UNC119. Interacts with ARFIP1; this interaction directs ARFIP1 to the trans-Golgi membranes. Interacts with ARFGEF1 (via N-terminus).

Its subcellular location is the golgi apparatus membrane. The protein localises to the golgi apparatus. It is found in the trans-Golgi network membrane. The protein resides in the membrane. Functionally, GTP-binding protein that recruits several effectors, such as golgins, arfaptins and Arf-GEFs to the trans-Golgi network, and modulates their functions at the Golgi complex. Plays thereby a role in a wide range of fundamental cellular processes, including cell polarity, innate immunity, or protein secretion mediated by arfaptins, which were shown to play a role in maintaining insulin secretion from pancreatic beta cells. This Bos taurus (Bovine) protein is ADP-ribosylation factor-like protein 1 (ARL1).